A 270-amino-acid polypeptide reads, in one-letter code: MAKMTSRQLANELKSRLTNDNWSHQFDREKDTLRIEDKQTGKGITLELPPIIAKWEVKPDETLDEIVYYVKEALSAMKGEAQHISGKEKQIYPVIRSTSFPEASSDGIPLVFDEHTAETRIYYALDLGSTYRLIDEKMLQKENWTKERIRETASFNVRSLETVVKMDEVAGNRFYFFRANDGYDASRLLNESILQEYAQKIEGQMAISVPHQDVFIIADVCNESGYDILGQMSMSFFASGTVPITALSFLYDEGKLEPIFILAKSRPKQQ.

The protein belongs to the UPF0354 family.

The protein is UPF0354 protein BPUM_2629 of Bacillus pumilus (strain SAFR-032).